Here is a 351-residue protein sequence, read N- to C-terminus: Peroxidase C1B (351 aa).

Residues 1 to 28 form the signal peptide; it reads MHSPSSTSFTWILITLGCLAFYASLSDA. Disulfide bonds link C39–C119, C72–C77, C125–C329, and C205–C237. The N-linked (GlcNAc...) asparagine glycan is linked to N41. Catalysis depends on H70, which acts as the Proton acceptor. Ca(2+) contacts are provided by D71, V74, G76, D78, and S80. The N-linked (GlcNAc...) asparagine glycan is linked to N85. Residue P167 participates in substrate binding. Residue H198 participates in heme b binding. Residue T199 participates in Ca(2+) binding. Residues N214, N226, and N242 are each glycosylated (N-linked (GlcNAc...) asparagine). Residues D250, T253, and D258 each coordinate Ca(2+). N283 carries an N-linked (GlcNAc...) asparagine glycan.

Belongs to the peroxidase family. Classical plant (class III) peroxidase subfamily. It depends on Ca(2+) as a cofactor. Heme b serves as cofactor.

The protein resides in the secreted. It is found in the vacuole. It carries out the reaction 2 a phenolic donor + H2O2 = 2 a phenolic radical donor + 2 H2O. Removal of H(2)O(2), oxidation of toxic reductants, biosynthesis and degradation of lignin, suberization, auxin catabolism, response to environmental stresses such as wounding, pathogen attack and oxidative stress. These functions might be dependent on each isozyme/isoform in each plant tissue. The chain is Peroxidase C1B (PRXC1B) from Armoracia rusticana (Horseradish).